Consider the following 404-residue polypeptide: Trigger factor (404 aa).

One can recognise a PPIase FKBP-type domain in the interval 160 to 225 (KDHLFVRTEE…VLEVKTLKLP (66 aa)).

It belongs to the FKBP-type PPIase family. Tig subfamily.

The protein localises to the cytoplasm. It carries out the reaction [protein]-peptidylproline (omega=180) = [protein]-peptidylproline (omega=0). Involved in protein export. Acts as a chaperone by maintaining the newly synthesized protein in an open conformation. Functions as a peptidyl-prolyl cis-trans isomerase. The polypeptide is Trigger factor (Thermus thermophilus (strain ATCC 27634 / DSM 579 / HB8)).